Consider the following 434-residue polypeptide: Cobyrinate a,c-diamide synthase (434 aa).

Positions 239-430 constitute a GATase cobBQ-type domain; it reads KMAIAYDPAF…SHLHFSNFQL (192 aa). Residue cysteine 320 is the Nucleophile of the active site.

The protein belongs to the CobB/CbiA family. Requires Mg(2+) as cofactor.

The catalysed reaction is cob(II)yrinate + 2 L-glutamine + 2 ATP + 2 H2O = cob(II)yrinate a,c diamide + 2 L-glutamate + 2 ADP + 2 phosphate + 2 H(+). It participates in cofactor biosynthesis; adenosylcobalamin biosynthesis; cob(II)yrinate a,c-diamide from sirohydrochlorin (anaerobic route): step 10/10. Functionally, catalyzes the ATP-dependent amidation of the two carboxylate groups at positions a and c of cobyrinate, using either L-glutamine or ammonia as the nitrogen source. In Saccharolobus solfataricus (strain ATCC 35092 / DSM 1617 / JCM 11322 / P2) (Sulfolobus solfataricus), this protein is Cobyrinate a,c-diamide synthase.